An 865-amino-acid polypeptide reads, in one-letter code: cGMP-specific 3',5'-cyclic phosphodiesterase (865 aa).

Positions 69-83 (CSCSSQQSSRADSSA) are enriched in low complexity. A disordered region spans residues 69–92 (CSCSSQQSSRADSSAPGTPTRKIS). Serine 92 carries the phosphoserine modification. 2 GAF domains span residues 154–304 (DVTA…GIVL) and 336–493 (SLEV…GLGI). One can recognise a PDEase domain in the interval 526–850 (ETKELQSLAA…QKWQALAEQQ (325 aa)). Residue histidine 603 is the Proton donor of the active site. Zn(2+)-binding residues include histidine 607, histidine 643, aspartate 644, and aspartate 754. Aspartate 644 provides a ligand contact to Mg(2+). Position 807 (glutamine 807) interacts with 3',5'-cyclic GMP.

It belongs to the cyclic nucleotide phosphodiesterase family. Zn(2+) is required as a cofactor. It depends on Mg(2+) as a cofactor. Phosphorylation is regulated by binding of cGMP to the two allosteric sites. Phosphorylation by PRKG1 leads to its activation. As to expression, isoform PDE5A1 and isoform PDE5A2 are highly expressed in the cerebellum, hippocampus, retina, lung, heart, spleen, and thoracic artery. Isoform PDE5A1, but not isoform PDE5A2, is also abundantly expressed in the pylorus.

It is found in the cytoplasm. The protein localises to the cytosol. The enzyme catalyses 3',5'-cyclic GMP + H2O = GMP + H(+). It functions in the pathway purine metabolism; 3',5'-cyclic GMP degradation; GMP from 3',5'-cyclic GMP: step 1/1. Inhibited by zaprinast. Plays a role in signal transduction by regulating the intracellular concentration of cyclic nucleotides. This phosphodiesterase catalyzes the specific hydrolysis of cGMP to 5'-GMP. Specifically regulates nitric-oxide-generated cGMP. The chain is cGMP-specific 3',5'-cyclic phosphodiesterase (PDE5A) from Canis lupus familiaris (Dog).